The sequence spans 82 residues: U16-lycotoxin-Ls1a (82 aa).

The first 22 residues, 1–22, serve as a signal peptide directing secretion; the sequence is MSPKVQALLLLVGLITFLAVHA. Residues 23–34 constitute a propeptide that is removed on maturation; the sequence is EEELSETVESER. 4 cysteine pairs are disulfide-bonded: Cys36–Cys51, Cys43–Cys56, Cys50–Cys67, and Cys58–Cys65.

This sequence belongs to the neurotoxin 02 (plectoxin) family. 04 (U16-lycotoxin) subfamily. As to expression, expressed by the venom gland.

It localises to the secreted. The sequence is that of U16-lycotoxin-Ls1a from Lycosa singoriensis (Wolf spider).